A 467-amino-acid chain; its full sequence is Acid phosphatase PHO12 (467 aa).

Residues 1-17 form the signal peptide; sequence MLKSAVYSILAASLVNA. The Nucleophile role is filled by His75. N-linked (GlcNAc...) asparagine glycosylation is found at Asn97, Asn162, Asn192, Asn250, and Asn315. The active-site Proton donor is the Asp338. N-linked (GlcNAc...) asparagine glycosylation is found at Asn356, Asn390, Asn439, Asn445, and Asn461.

This sequence belongs to the histidine acid phosphatase family. In terms of processing, glycosylated during secretion across the membrane.

It carries out the reaction a phosphate monoester + H2O = an alcohol + phosphate. This Saccharomyces cerevisiae (strain ATCC 204508 / S288c) (Baker's yeast) protein is Acid phosphatase PHO12 (PHO12).